A 98-amino-acid chain; its full sequence is MAAINRDDVAHLARLAHIEMSAQELDRMAGELAVIVDSVKSVSEAAGDDVPATSHPIPLTNVFREDVVGHTFSAEQALSGAPDSDDNRFKVPAILDEA.

The disordered stretch occupies residues 75-98 (EQALSGAPDSDDNRFKVPAILDEA).

This sequence belongs to the GatC family. Heterotrimer of A, B and C subunits.

The catalysed reaction is L-glutamyl-tRNA(Gln) + L-glutamine + ATP + H2O = L-glutaminyl-tRNA(Gln) + L-glutamate + ADP + phosphate + H(+). It catalyses the reaction L-aspartyl-tRNA(Asn) + L-glutamine + ATP + H2O = L-asparaginyl-tRNA(Asn) + L-glutamate + ADP + phosphate + 2 H(+). Functionally, allows the formation of correctly charged Asn-tRNA(Asn) or Gln-tRNA(Gln) through the transamidation of misacylated Asp-tRNA(Asn) or Glu-tRNA(Gln) in organisms which lack either or both of asparaginyl-tRNA or glutaminyl-tRNA synthetases. The reaction takes place in the presence of glutamine and ATP through an activated phospho-Asp-tRNA(Asn) or phospho-Glu-tRNA(Gln). This Pseudarthrobacter chlorophenolicus (strain ATCC 700700 / DSM 12829 / CIP 107037 / JCM 12360 / KCTC 9906 / NCIMB 13794 / A6) (Arthrobacter chlorophenolicus) protein is Aspartyl/glutamyl-tRNA(Asn/Gln) amidotransferase subunit C.